A 364-amino-acid polypeptide reads, in one-letter code: sn-glycerol-3-phosphate import ATP-binding protein UgpC (364 aa).

The region spanning 4–235 (VVLRNVRKTY…PATTFVASFI (232 aa)) is the ABC transporter domain. Residue 37-44 (GPSGCGKS) participates in ATP binding.

It belongs to the ABC transporter superfamily. sn-glycerol-3-phosphate importer (TC 3.A.1.1.3) family. The complex is composed of two ATP-binding proteins (UgpC), two transmembrane proteins (UgpA and UgpE) and a solute-binding protein (UgpB).

The protein localises to the cell inner membrane. The enzyme catalyses sn-glycerol 3-phosphate(out) + ATP + H2O = sn-glycerol 3-phosphate(in) + ADP + phosphate + H(+). Functionally, part of the ABC transporter complex UgpBAEC involved in sn-glycerol-3-phosphate (G3P) import. Responsible for energy coupling to the transport system. The sequence is that of sn-glycerol-3-phosphate import ATP-binding protein UgpC from Rhodopseudomonas palustris (strain BisB5).